The sequence spans 3470 residues: Dynein axonemal heavy chain 5 (3470 aa).

Residues 1–1938 form a stem region; it reads MFRIGRRQLW…MIHITDVAFT (1938 aa). The interval 899-918 is disordered; the sequence is EKVRHENASPNGDTSGGGEG. 4 AAA regions span residues 1939–2161, 2221–2440, 2547–2800, and 2913–3167; these read YQNE…VLRT, TAIS…IQNL, VYPP…IWQG, and LYNE…FRRS. Residues 1977–1984 and 2259–2266 contribute to the ATP site; these read GPAGTGKT and GPSGSGKT. 2 coiled-coil regions span residues 3207–3241 and 3434–3468; these read LKEA…VLKE and HALA…AMTE.

It belongs to the dynein heavy chain family. As to quaternary structure, interacts with DNAL1. Consists of at least two heavy chains and a number of intermediate and light chains.

It localises to the cytoplasm. The protein resides in the cytoskeleton. The protein localises to the cilium axoneme. Its function is as follows. Force generating protein of respiratory cilia. Produces force towards the minus ends of microtubules. Dynein has ATPase activity; the force-producing power stroke is thought to occur on release of ADP. Required for structural and functional integrity of the cilia of ependymal cells lining the brain ventricles. This Rattus norvegicus (Rat) protein is Dynein axonemal heavy chain 5.